Reading from the N-terminus, the 370-residue chain is MEILMTVSKFASICTMGANASALEKEIGPEQFPVNEHYFGLVNFGNTCYCNSVLQALYFCRPFREKVLAYKSQPRKKESLLTCLADLFHSIATQKKKVGVIPPKKFITRLRKENELFDNYMQQDAHEFLNYLLNTIADILQEERKQEKQNGRLPNGNIDNENNNSTPDPTWVHEIFQGTLTNETRCLTCETISSKDEDFLDLSVDVEQNTSITHCLRGFSNTETLCSEYKYYCEECRSKQEAHKRMKVKKLPMILALHLKRFKYMDQLHRYTKLSYRVVFPLELRLFNTSGDATNPDRMYDLVAVVVHCGSGPNRGHYIAIVKSHDFWLLFDDDIVEKIDAQAIEEFYGLTSDISKNSESGYILFYQSRD.

The short motif at 1 to 4 (MEIL) is the Required for plasma membrane localization of USP12/WDR20 element. Positions 39–369 (FGLVNFGNTC…SGYILFYQSR (331 aa)) constitute a USP domain. Cys48 acts as the Nucleophile in catalysis. The segment at 145–169 (KQEKQNGRLPNGNIDNENNNSTPDP) is disordered. Polar residues predominate over residues 157 to 168 (NIDNENNNSTPD). Zn(2+) is bound by residues Cys186, Cys189, Cys233, and Cys236. The active-site Proton acceptor is His317.

This sequence belongs to the peptidase C19 family. USP12/USP46 subfamily. Interacts with WDR48. Interacts with WDR20; this interaction promotes translocation of the USP12 complex to the plasma membrane. Component of the USP12-WDR20-WDR48 deubiquitinating complex. Component of the USP12-DMWD-WDR48 deubiquitinating complex. Interacts with PHLPP1. Interacts with RBPJ. Interacts with CBP; this interaction blocks the acetyltransferase activity of CREBBP. Interacts with ITCH; the interaction is more efficient when both USP12 and WDR48/UAF1 are involved and may mediate recruitment of the USP12 deubiquitinating complex to Notch. Interacts with OPTN and SQSTM1/p62; the interaction is independent of deubiquitinase activity and may be involved in regulation of autophagic flux. In terms of assembly, (Microbial infection) Interacts with Epstein-Barr virus protein EBNA3.

Its subcellular location is the nucleus. It localises to the cytoplasm. It is found in the cell membrane. It catalyses the reaction Thiol-dependent hydrolysis of ester, thioester, amide, peptide and isopeptide bonds formed by the C-terminal Gly of ubiquitin (a 76-residue protein attached to proteins as an intracellular targeting signal).. With respect to regulation, activated by interaction with WDR20, WDR48 and DMWD through different allosteric mechanisms. Functionally, deubiquitinating enzyme that plays various roles in the regulation of the immune response and inflammation. During TCR engagement and activation, translocates into the cytoplasm and deubiquitinates its substrates LAT and TRAT1 and prevents their lysosome-dependent degradation to stabilize the TCR signaling complex at the plasma membrane. Plays an essential role in the selective LPS-induced macrophage response through the activation of NF-kappa-B pathway. In addition, promotes that antiviral immune response through targeting DNA sensor IFI16 to inhibit its proteasome-dependent degradation. Participates in the interferon signaling pathway and antiviral response independently of its deubiquitinase activity by maintaining nuclear phosphorylated STAT1 levels via inhibition of its CREBBP-mediated acetylation and subsequent dephosphorylation. Plays an intrinsic role in promoting the differentiation, activation and proliferation of CD4(+) T-cell by activating the NF-kappa-B signaling pathway through deubiquitinating and stabilizing B-cell lymphoma/leukemia 10/BCL10. In myeloid-derived suppressor cells promotes the activation of the NF-kappa-B via deubiquitination and stabilization of RELA. Regulates the 'Lys-63'-linked polyubiquitin chains of BAX and thereby modulates the mitochondrial apoptotic process. Negative regulator of NOTCH signaling that specifically deubiquitinates non-activated NOTCH receptors to target them for lysosomal degradation; deubiquitination of NOTCH stimulates its transport form late endosomes to lysosomes. Protects neurons against HTT/huntingtin-induced polyglutamine expansion-dependent neurodegeneration through regulation of autophagic flux. This function is independent of deubiquitinase activity or of other components of the USP12-WDR20-WDR48 deubiquitinating complex. In complex with WDR48, acts as a potential tumor suppressor by positively regulating PHLPP1 stability. Its function is as follows. (Microbial infection) Forms a complex with Epstein-Barr virus protein EBNA3 which is an active deubiquitinase activity that may select specific substrates to promote B-lymphocyte transformation. In Homo sapiens (Human), this protein is Ubiquitin carboxyl-terminal hydrolase 12 (USP12).